Reading from the N-terminus, the 213-residue chain is Octanoyltransferase (213 aa).

The 176-residue stretch at 32–207 (ENSHDEIWLV…NILALLNNPP (176 aa)) folds into the BPL/LPL catalytic domain. Substrate-binding positions include 71-78 (RGGQVTYH), 138-140 (SLG), and 151-153 (GLA). Cys169 serves as the catalytic Acyl-thioester intermediate.

This sequence belongs to the LipB family.

It localises to the cytoplasm. It catalyses the reaction octanoyl-[ACP] + L-lysyl-[protein] = N(6)-octanoyl-L-lysyl-[protein] + holo-[ACP] + H(+). It participates in protein modification; protein lipoylation via endogenous pathway; protein N(6)-(lipoyl)lysine from octanoyl-[acyl-carrier-protein]: step 1/2. Its function is as follows. Catalyzes the transfer of endogenously produced octanoic acid from octanoyl-acyl-carrier-protein onto the lipoyl domains of lipoate-dependent enzymes. Lipoyl-ACP can also act as a substrate although octanoyl-ACP is likely to be the physiological substrate. The polypeptide is Octanoyltransferase (Salmonella typhi).